The chain runs to 203 residues: Shikimate kinase (203 aa).

32 to 37 (GAGKTA) provides a ligand contact to ATP. Thr36 is a binding site for Mg(2+). Positions 54, 78, and 100 each coordinate substrate. Arg138 is an ATP binding site. Arg157 lines the substrate pocket.

Belongs to the shikimate kinase family. Monomer. Requires Mg(2+) as cofactor.

The protein localises to the cytoplasm. It catalyses the reaction shikimate + ATP = 3-phosphoshikimate + ADP + H(+). The protein operates within metabolic intermediate biosynthesis; chorismate biosynthesis; chorismate from D-erythrose 4-phosphate and phosphoenolpyruvate: step 5/7. In terms of biological role, catalyzes the specific phosphorylation of the 3-hydroxyl group of shikimic acid using ATP as a cosubstrate. In Mesorhizobium japonicum (strain LMG 29417 / CECT 9101 / MAFF 303099) (Mesorhizobium loti (strain MAFF 303099)), this protein is Shikimate kinase.